The primary structure comprises 221 residues: Transcription factor HES-4 (221 aa).

Positions 1-22 are enriched in low complexity; sequence MAADTPGKPSASPMAGAPASAS. The tract at residues 1 to 49 is disordered; sequence MAADTPGKPSASPMAGAPASASRTPDKPRSAAEHRKSSKPVMEKRRRAR. Positions 24–35 are enriched in basic and acidic residues; it reads TPDKPRSAAEHR. Residues 34-91 form the bHLH domain; that stretch reads HRKSSKPVMEKRRRARINESLAQLKTLILDALRKESSRHSKLEKADILEMTVRHLRSL. The 34-residue stretch at 110-143 folds into the Orange domain; it reads YRAGFHECLAEVNRFLAGCEGVPADVRSRLLGHL. The disordered stretch occupies residues 201–221; it reads LPAAPRAGPQGPGGPWRPWLR. The WRPW motif signature appears at 216 to 219; it reads WRPW.

Transcription repression requires formation of a complex with a corepressor protein of the Groucho/TLE family.

The protein resides in the nucleus. In terms of biological role, transcriptional repressor. Binds DNA on N-box motifs: 5'-CACNAG-3'. The chain is Transcription factor HES-4 (HES4) from Homo sapiens (Human).